The sequence spans 117 residues: Photosystem II reaction center Psb28 protein (117 aa).

It belongs to the Psb28 family. In terms of assembly, part of the photosystem II complex.

It is found in the cellular thylakoid membrane. This Prochlorococcus marinus (strain MIT 9515) protein is Photosystem II reaction center Psb28 protein.